The primary structure comprises 302 residues: Beta-1,2-mannobiose phosphorylase (302 aa).

Belongs to the glycosyl hydrolase 130 family. As to quaternary structure, monomer.

It catalyses the reaction beta-D-mannopyranosyl-(1-&gt;2)-D-mannopyranose + phosphate = alpha-D-mannose 1-phosphate + D-mannose. It participates in nucleotide-sugar biosynthesis; GDP-alpha-D-mannose biosynthesis. Functionally, probably involved in a salvage pathway for GDP-D-mannose biosynthesis. Catalyzes the reversible phosphorolysis of 1,2-beta-oligomannan. In phosphorolytic reactions, prefers beta-1,2-mannobiose (beta-1,2-Man2) as substrate. Produces alpha-D-mannose 1-phosphate, which is the precursor of GDP-D-mannose. This chain is Beta-1,2-mannobiose phosphorylase, found in Thermoanaerobacter sp. (strain X514).